Here is a 319-residue protein sequence, read N- to C-terminus: ADP-ribosyl cyclase/cyclic ADP-ribose hydrolase 2 (319 aa).

The first 33 residues, 1–33 (MAVQACALSLRLGLWMSLLLPVLPGAGARAAGA), serve as a signal peptide directing secretion. Disulfide bonds link C52–C68, C84–C164, and C145–C158. N-linked (GlcNAc...) asparagine glycans are attached at residues N67 and N96. W110 is a binding site for NAD(+). W110 is a binding site for nicotinamide. N-linked (GlcNAc...) asparagine glycosylation is present at N149. W173 serves as a coordination point for NAD(+). N193 carries N-linked (GlcNAc...) asparagine glycosylation. Residue E211 coordinates NAD(+). Cystine bridges form between C239/C260 and C272/C281. S294 is lipidated: GPI-anchor amidated serine. Residues 295–319 (PALHAIGDISLIISLLVALASSSQA) constitute a propeptide that is removed on maturation.

The protein belongs to the ADP-ribosyl cyclase family. As to quaternary structure, homodimer. In terms of tissue distribution, pancreatic islets, kidney, spleen, heart, thymus, intestine and salivary gland.

It is found in the cell membrane. It carries out the reaction NAD(+) + H2O = ADP-D-ribose + nicotinamide + H(+). It catalyses the reaction NAD(+) = cyclic ADP-beta-D-ribose + nicotinamide + H(+). The enzyme catalyses cyclic ADP-beta-D-ribose + H2O = ADP-D-ribose. Catalyzes both the synthesis of cyclic ADP-beta-D-ribose (cADPR) from NAD(+), and its hydrolysis to ADP-D-ribose (ADPR). Cyclic ADPR is known to serve as an endogenous second messenger that elicits calcium release from intracellular stores, and thus regulates the mobilization of intracellular calcium. May be involved in pre-B-cell growth. In Rattus norvegicus (Rat), this protein is ADP-ribosyl cyclase/cyclic ADP-ribose hydrolase 2 (Bst1).